Here is a 393-residue protein sequence, read N- to C-terminus: MSSRFSLTVVCLIALLPFVVGIRLIPARITSVGDGGGGGGNNGFSKLGPFMEAPEYRNGKECVSSSVNRENFVSSSSSSNDPSLVHIAMTLDSEYLRGSIAAVHSVLRHASCPENVFFHFIAAEFDSASPRVLSQLVRSTFPSLNFKVYIFREDTVINLISSSIRLALENPLNYARNYLGDILDRSVERVIYLDSDVITVDDITKLWNTVLTGSRVIGAPEYCHANFTQYFTSGFWSDPALPGLISGQKPCYFNTGVMVMDLVRWREGNYREKLEQWMQLQKKMRIYDLGSLPPFLLVFAGNVEAIDHRWNQHGLGGDNIRGSCRSLHPGPVSLLHWSGKGKPWVRLDEKRPCPLDHLWEPYDLYKHKIERAKDQSLLGFASLSELTDDSSFL.

Residues 1 to 4 (MSSR) are Cytoplasmic-facing. Residues 5–25 (FSLTVVCLIALLPFVVGIRLI) form a helical; Signal-anchor for type II membrane protein membrane-spanning segment. The Lumenal portion of the chain corresponds to 26–393 (PARITSVGDG…SELTDDSSFL (368 aa)). N-linked (GlcNAc...) asparagine glycosylation is present at Asn226.

It belongs to the glycosyltransferase 8 family.

Its subcellular location is the golgi apparatus membrane. It functions in the pathway glycan metabolism; pectin biosynthesis. In terms of biological role, may be involved in pectin and/or xylans biosynthesis in cell walls. The polypeptide is Probable galacturonosyltransferase-like 8 (GATL8) (Arabidopsis thaliana (Mouse-ear cress)).